A 67-amino-acid polypeptide reads, in one-letter code: Minor structural pilin EpdD (67 aa).

Residues 1–13 (MSVALKKFFSKRG) constitute a propeptide that is removed on maturation. The short motif at 14–22 (QLSLEFSVL) is the QXSXEXXXL element.

The N-terminus is cleaved by the prepilin peptidase EppA, which recognizes the class III signal sequence. Post-translationally, N-glycosylated. Glycosylation is AglB-dependent. The N-glycosylation does not occur unless the signal peptide has been cleaved first.

The protein resides in the secreted. It localises to the cell surface. The protein localises to the fimbrium. Its function is as follows. Minor component of the type IV-like pili. Essential for pili formation. The protein is Minor structural pilin EpdD of Methanococcus maripaludis (strain DSM 14266 / JCM 13030 / NBRC 101832 / S2 / LL).